The chain runs to 316 residues: tRNA-cytidine(32) 2-sulfurtransferase (316 aa).

Positions 45–50 (SGGKDS) match the PP-loop motif motif. The [4Fe-4S] cluster site is built by Cys-120, Cys-123, and Cys-211.

It belongs to the TtcA family. In terms of assembly, homodimer. Requires Mg(2+) as cofactor. [4Fe-4S] cluster is required as a cofactor.

Its subcellular location is the cytoplasm. The catalysed reaction is cytidine(32) in tRNA + S-sulfanyl-L-cysteinyl-[cysteine desulfurase] + AH2 + ATP = 2-thiocytidine(32) in tRNA + L-cysteinyl-[cysteine desulfurase] + A + AMP + diphosphate + H(+). It functions in the pathway tRNA modification. Catalyzes the ATP-dependent 2-thiolation of cytidine in position 32 of tRNA, to form 2-thiocytidine (s(2)C32). The sulfur atoms are provided by the cysteine/cysteine desulfurase (IscS) system. The chain is tRNA-cytidine(32) 2-sulfurtransferase from Shewanella sediminis (strain HAW-EB3).